Reading from the N-terminus, the 403-residue chain is Na(+)-translocating NADH-quinone reductase subunit B (403 aa).

Helical transmembrane passes span 56-76, 121-141, 164-184, 225-245, 260-280, 287-307, 312-332, 348-368, and 371-391; these read MMIIVWLCTFPAMFFGMYNVG, AYFLPVYLTTFIVGGFWEVLF, LPPSVPLWQVALGISFGVVLG, GFAGATSLSLAAAGGVDNILG, GSMGETSTLAIFIGGAVLLLT, IVAGVMLGMIAMSYLFNAIGS, MFAMPWYWHLVTGGFAFGMIF, WLFGALIGVMVMLIRVVNPAF, and GMMLAILFANLFAPLIDHFVV. Threonine 230 bears the FMN phosphoryl threonine mark.

Belongs to the NqrB/RnfD family. As to quaternary structure, composed of six subunits; NqrA, NqrB, NqrC, NqrD, NqrE and NqrF. FMN is required as a cofactor.

Its subcellular location is the cell inner membrane. The catalysed reaction is a ubiquinone + n Na(+)(in) + NADH + H(+) = a ubiquinol + n Na(+)(out) + NAD(+). Its function is as follows. NQR complex catalyzes the reduction of ubiquinone-1 to ubiquinol by two successive reactions, coupled with the transport of Na(+) ions from the cytoplasm to the periplasm. NqrA to NqrE are probably involved in the second step, the conversion of ubisemiquinone to ubiquinol. The sequence is that of Na(+)-translocating NADH-quinone reductase subunit B from Pseudomonas paraeruginosa (strain DSM 24068 / PA7) (Pseudomonas aeruginosa (strain PA7)).